We begin with the raw amino-acid sequence, 224 residues long: Protein-L-isoaspartate O-methyltransferase (224 aa).

The active site involves serine 63.

It belongs to the methyltransferase superfamily. L-isoaspartyl/D-aspartyl protein methyltransferase family.

It localises to the cytoplasm. It carries out the reaction [protein]-L-isoaspartate + S-adenosyl-L-methionine = [protein]-L-isoaspartate alpha-methyl ester + S-adenosyl-L-homocysteine. Catalyzes the methyl esterification of L-isoaspartyl residues in peptides and proteins that result from spontaneous decomposition of normal L-aspartyl and L-asparaginyl residues. It plays a role in the repair and/or degradation of damaged proteins. The sequence is that of Protein-L-isoaspartate O-methyltransferase from Herpetosiphon aurantiacus (strain ATCC 23779 / DSM 785 / 114-95).